The following is a 617-amino-acid chain: Hemagglutinin glycoprotein (617 aa).

Residues 1-37 (MSPQRDRINAFDKDNPHPXXXXXXXXXXXXXXXRPYV) are Intravirion-facing. The stalk stretch occupies residues 1 to 154 (MSPQRDRINA…RIKLDYDQYC (154 aa)). The helical; Signal-anchor for type II membrane protein transmembrane segment at 38 to 58 (LLAVLFVMFLSLIGLLAIAGI) threads the bilayer. Over 59 to 617 (RFHRAAIYTA…VTREDGTNCR (559 aa)) the chain is Virion surface. 5 N-linked (GlcNAc...) asparagine; by host glycosylation sites follow: Asn-168, Asn-187, Asn-200, Asn-215, and Asn-238. 5 cysteine pairs are disulfide-bonded: Cys-188-Cys-606, Cys-287-Cys-300, Cys-381-Cys-494, Cys-386-Cys-394, and Cys-570-Cys-579. The interval 458–543 (PMKSLALGVV…VEHAVVYYVY (86 aa)) is interaction with host NECTIN4 receptor.

This sequence belongs to the paramyxoviruses hemagglutinin-neuraminidase family. Non-sialidase subfamily. In terms of assembly, homodimer; disulfide-linked. Further forms homotetramer (dimer of dimers). Interacts (via C-terminus) with human NECTIN4 (via N-terminus); this interaction allows attachment to the respiratory epithelium and viral entry. Interacts (via C-terminus) with human SLAMF1/CD150 (via N-terminus); this interaction allows attachment and viral entry into the CD150-expressing immune cells.

Its subcellular location is the virion membrane. The protein localises to the host cell membrane. Its function is as follows. Attaches the virus to the human SLAMF1/CD150 receptor for entry into host dendritic cells, macrophages, activated memory T cells and naive or memory B cells, thereby explaining the long immunosuppression that follows infection. In the respiratory airways, binds to the NECTIN4 receptor for entry into the host cell. Binding of H protein to the receptor induces a conformational change that allows the F protein to trigger virion/cell membranes fusion. The vaccine and laboratory-adapted strains use host CD46 as an alternate receptor. The high degree of interaction between H and CD46 results in down-regulation of the latter from the surface of infected cells, rendering them more sensitive to c3b-mediated complement lysis. This chain is Hemagglutinin glycoprotein (H), found in Homo sapiens (Human).